The primary structure comprises 445 residues: Phosphoglucosamine mutase (445 aa).

The Phosphoserine intermediate role is filled by Ser-102. Residues Ser-102, Asp-241, Asp-243, and Asp-245 each contribute to the Mg(2+) site. At Ser-102 the chain carries Phosphoserine.

This sequence belongs to the phosphohexose mutase family. Mg(2+) is required as a cofactor. Post-translationally, activated by phosphorylation.

It carries out the reaction alpha-D-glucosamine 1-phosphate = D-glucosamine 6-phosphate. Catalyzes the conversion of glucosamine-6-phosphate to glucosamine-1-phosphate. In Variovorax paradoxus (strain S110), this protein is Phosphoglucosamine mutase.